Here is a 119-residue protein sequence, read N- to C-terminus: Large ribosomal subunit protein uL24 (119 aa).

The protein belongs to the universal ribosomal protein uL24 family. In terms of assembly, part of the 50S ribosomal subunit.

Functionally, one of two assembly initiator proteins, it binds directly to the 5'-end of the 23S rRNA, where it nucleates assembly of the 50S subunit. Its function is as follows. One of the proteins that surrounds the polypeptide exit tunnel on the outside of the subunit. The chain is Large ribosomal subunit protein uL24 from Paenarthrobacter aurescens (strain TC1).